We begin with the raw amino-acid sequence, 122 residues long: Large ribosomal subunit protein uL14 (122 aa).

This sequence belongs to the universal ribosomal protein uL14 family. In terms of assembly, part of the 50S ribosomal subunit. Forms a cluster with proteins L3 and L19. In the 70S ribosome, L14 and L19 interact and together make contacts with the 16S rRNA in bridges B5 and B8.

In terms of biological role, binds to 23S rRNA. Forms part of two intersubunit bridges in the 70S ribosome. The sequence is that of Large ribosomal subunit protein uL14 from Nostoc punctiforme (strain ATCC 29133 / PCC 73102).